The following is a 618-amino-acid chain: ADP,ATP carrier protein 2, chloroplastic (618 aa).

Residues 1–76 (MEGLIQTRGI…KERSRGFICK (76 aa)) constitute a chloroplast transit peptide. A77 carries the N-acetylalanine modification. Transmembrane regions (helical) follow at residues 110–130 (LKKI…YTIL), 148–168 (IIPF…MLLY), 179–199 (ALFY…GFVM), 237–257 (LFYV…FWGF), 270–289 (FYPL…GRTV), 312–332 (AMMS…WWVN), 368–388 (LATL…TWKS), 401–421 (SAFM…MMLL), 441–461 (VLLL…PFAP), 464–484 (AKLG…QNIF), and 542–562 (LANS…AWLA). Residues 586–618 (RASSVKIPVVSQEDAPSGETTSQLSEKSTPTGI) are disordered. Polar residues predominate over residues 603–618 (GETTSQLSEKSTPTGI).

This sequence belongs to the ADP/ATP translocase tlc (TC 2.A.12.2) family.

Its subcellular location is the plastid. It is found in the chloroplast membrane. The protein is ADP,ATP carrier protein 2, chloroplastic (AATP2) of Arabidopsis thaliana (Mouse-ear cress).